Consider the following 630-residue polypeptide: MRKWRIEDSEELYNITGWGTSYFSINDAGHVVVTPRRDGVTVDLKELVDELQLRDVASPMLLRFPDILDNRIEKMSSCFKQAAEEYGYKAENFIIYPIKVNQMRPVVEEIISHGKKFNLGLEAGSKPELHAVIAVNTDSDSLIVCNGYKDESYIELALLAQKMGKRIFLVVEKMNELKLIAKMAKQLNVQPNIGIRIKLASSGSGKWEESGGDASKFGLTSSELLEALDFMESKGLKDCLKLIHFHIGSQVTKIRRIKTALREASQFYVQLHSMGFNVEFVDIGGGLGVDYDGTRSSNSEGSVNYSIQEYVNDSISTLVDVSDKNGIPHPNIITESGRALTAHHSVLIFEVLETATLPEWDDEEEIAPDAHELVQELYSIWDSLNQNKMLEAWHDAQQIREEALDLFSHGIVDLKTRAQIERLYWSITREINQIAGGLKHAPDEFRGLSKLLADKYFCNFSLFQSLPDSWAIDQIFPIMPIQRLDEKPERSATLQDITCDSDGKIANFISTRNVAHYLPVHSLKKTEPYYLAVFLVGAYQEILGDMHNLFGDTNAVHVSVNEKGYNIEQIIDGETVAEVLDYVQYNPKKLVRTLETWVTKSVKEGKISLEEGKEFLSNYRSGLYGYTYLE.

K99 carries the post-translational modification N6-(pyridoxal phosphate)lysine. V281 to Y291 is a binding site for substrate.

Belongs to the Orn/Lys/Arg decarboxylase class-II family. SpeA subfamily. Mg(2+) serves as cofactor. Requires pyridoxal 5'-phosphate as cofactor.

The catalysed reaction is L-arginine + H(+) = agmatine + CO2. Functionally, catalyzes the biosynthesis of agmatine from arginine. This is Biosynthetic arginine decarboxylase from Bacteroides thetaiotaomicron (strain ATCC 29148 / DSM 2079 / JCM 5827 / CCUG 10774 / NCTC 10582 / VPI-5482 / E50).